The primary structure comprises 117 residues: Shadow of prion protein (117 aa).

The first 24 residues, 1–24 (MRQRVACCWVLLLLAATFCQPAAA), serve as a signal peptide directing secretion. An N-linked (GlcNAc...) asparagine glycan is attached at Asn-87. Ala-104 is lipidated: GPI-anchor amidated alanine. Residues 105-117 (MPWLCPLAAILHH) constitute a propeptide, removed in mature form.

This sequence belongs to the SPRN family.

The protein localises to the cell membrane. Functionally, prion-like protein that has PrP(C)-like neuroprotective activity. This chain is Shadow of prion protein (SPRN), found in Gallus gallus (Chicken).